A 1073-amino-acid polypeptide reads, in one-letter code: Envelopment polyprotein (1073 aa).

The signal sequence occupies residues 1–19 (MMKVIWFSSLICFVIQCSG). The Lumenal segment spans residues 20–453 (DSGPIICAGP…NPQCYPAKKW (434 aa)). A disulfide bridge connects residues cysteine 26 and cysteine 49. N-linked (GlcNAc...) asparagine; by host glycosylation is found at asparagine 33 and asparagine 63. 10 disulfides stabilise this stretch: cysteine 143–cysteine 156, cysteine 180–cysteine 327, cysteine 206–cysteine 216, cysteine 258–cysteine 305, cysteine 266–cysteine 303, cysteine 274–cysteine 280, cysteine 287–cysteine 292, cysteine 349–cysteine 352, cysteine 356–cysteine 424, and cysteine 376–cysteine 381. The helical transmembrane segment at 454-474 (LFIIIVILLGYAGLMLLTNVL) threads the bilayer. Positions 475 to 521 (KAIGIWGSWVIAPVKLMFAIIKKLMRTVSCLMRKLMDRGRQVIHEEI) are golgi retention signal. At 475 to 535 (KAIGIWGSWV…EGNQDDVRIE (61 aa)) the chain is on the cytoplasmic side. An internal signal sequence for glycoprotein C region spans residues 536–562 (MARPRRVRHWMYSPVILTILAIGLAES). Intrachain disulfides connect cysteine 563-cysteine 604, cysteine 576-cysteine 586, cysteine 629-cysteine 725, cysteine 644-cysteine 841, cysteine 650-cysteine 698, cysteine 656-cysteine 705, cysteine 660-cysteine 687, cysteine 691-cysteine 696, cysteine 778-cysteine 793, and cysteine 809-cysteine 823. At 563 to 1036 (CDEMVHADSK…ALFGNGLSRW (474 aa)) the chain is on the lumenal side. The segment at 650 to 656 (CRWAGDC) is fusion loop. Positions 691 to 705 (CGGAACGCFNAAPSC) are fusion loop. 2 N-linked (GlcNAc...) asparagine; by host glycosylation sites follow: asparagine 853 and asparagine 914. 3 disulfides stabilise this stretch: cysteine 908–cysteine 978, cysteine 918–cysteine 921, and cysteine 943–cysteine 974. Asparagine 936 is a glycosylation site (N-linked (GlcNAc...) asparagine; by host). A helical transmembrane segment spans residues 1037–1057 (ILGVIGVLLGGLALFFMIMSL). Topologically, residues 1058 to 1073 (FKLGTKQVFRSRTKLA) are cytoplasmic.

The protein belongs to the phlebovirus envelope glycoprotein family. In terms of assembly, homodimer. Heterodimer with glycoprotein C. Homotrimer (postfusion). Heterodimer with glycoprotein N. In terms of processing, specific enzymatic cleavages in vivo yield mature proteins including glycoprotein C and glycoprotein N. Post-translationally, the cytoplasmic tail is Palmitoylated. Glycosylated. In terms of processing, palmitoylated.

It localises to the virion membrane. It is found in the host Golgi apparatus membrane. Its subcellular location is the host endoplasmic reticulum membrane. Functionally, structural component of the virion that interacts with glycoprotein C. It shields the hydrophobic fusion loops of the glycoprotein C, preventing premature fusion. The glycoprotein protrusions are arranged on an icosahedral lattice, with T=12 triangulation. They are able to attach the virion to the host cell receptor CD209/DC-SIGN and to promote fusion of membranes with the late endosome after clathrin-mediated endocytosis of the virion. Plays a role in the packaging of ribonucleoproteins during virus assembly. Its function is as follows. Structural component of the virion that interacts with glycoprotein N. Acts as a class II fusion protein that is activated upon acidification and subsequent repositioning of the glycoprotein N. The glycoprotein protrusions are arranged on an icosahedral lattice, with T=12 triangulation. They are able to attach the virion to the host cell receptor CD209/DC-SIGN and to promote fusion of membranes with the late endosome after clathrin-mediated endocytosis of the virion. The protein is Envelopment polyprotein of Dabie bandavirus (Severe fever with thrombocytopenia virus).